Here is a 135-residue protein sequence, read N- to C-terminus: U-scoloptoxin(22)-Er1a (135 aa).

The signal sequence occupies residues Met-1–Gly-24. The interval Pro-61 to Ile-135 is disordered. Positions Ser-75–Ser-127 are enriched in basic and acidic residues.

The protein belongs to the scoloptoxin-22 family. Expressed by the venom gland.

Its subcellular location is the secreted. The sequence is that of U-scoloptoxin(22)-Er1a from Ethmostigmus rubripes (Giant centipede).